The chain runs to 250 residues: Imidazole glycerol phosphate synthase subunit HisF (250 aa).

Residues aspartate 11 and aspartate 130 contribute to the active site.

It belongs to the HisA/HisF family. As to quaternary structure, heterodimer of HisH and HisF.

It is found in the cytoplasm. The catalysed reaction is 5-[(5-phospho-1-deoxy-D-ribulos-1-ylimino)methylamino]-1-(5-phospho-beta-D-ribosyl)imidazole-4-carboxamide + L-glutamine = D-erythro-1-(imidazol-4-yl)glycerol 3-phosphate + 5-amino-1-(5-phospho-beta-D-ribosyl)imidazole-4-carboxamide + L-glutamate + H(+). It participates in amino-acid biosynthesis; L-histidine biosynthesis; L-histidine from 5-phospho-alpha-D-ribose 1-diphosphate: step 5/9. In terms of biological role, IGPS catalyzes the conversion of PRFAR and glutamine to IGP, AICAR and glutamate. The HisF subunit catalyzes the cyclization activity that produces IGP and AICAR from PRFAR using the ammonia provided by the HisH subunit. This is Imidazole glycerol phosphate synthase subunit HisF from Elusimicrobium minutum (strain Pei191).